The following is a 460-amino-acid chain: Rab-3A-interacting protein (460 aa).

S147, S149, S247, S250, S272, and S280 each carry phosphoserine. Positions 149–244 (SVLEVREKGY…EVAALKTLVL (96 aa)) form a coiled coil. The disordered stretch occupies residues 246 to 280 (SSPTSPTQEPLAAGKTPFKRGHTRNKSTSSAMSGS). Residues 271-280 (KSTSSAMSGS) show a composition bias toward polar residues.

This sequence belongs to the SEC2 family. In terms of assembly, homodimer. Interacts with the N-terminal region of SSX2. Interacts with the GDP-bound forms of RAB8A and RAB8B. The interaction with RAB8A is prevented by phosphorylation of RAB8A at 'Thr-72'. Interacts with the GDP-bound forms of RAB3A and RAB3D. Interacts with DCDC1. Interacts (via the N-terminal region) with TRAPPC14; this interaction mediates RAB3IP association with the TRAPP II complex. Forms a heterotetramer with RAB11A where RAB3IP homodimer binds two RAB11A subunits. Forms a complex with RAB11A and RAB11FIP3, probably a heterohexamer with two of each protein subunit, where Rabin8/RAB3IP and RAB11FIP3 simultaneously bind to RAB11A; the complex promotes preciliary trafficking. Forms a complex containing RAB11A, ASAP1, RAB3IP, RAP11FIP3 and ARF4; the complex promotes preciliary trafficking; the complex binds to RHO in photoreceptor cells and promotes RHO ciliary transport. As to expression, ubiquitously expressed. Expressed at highest level in testis.

It localises to the cytoplasm. Its subcellular location is the nucleus. It is found in the cytoskeleton. The protein resides in the cell projection. The protein localises to the lamellipodium. In terms of biological role, guanine nucleotide exchange factor (GEF) which may activate RAB8A and RAB8B. Promotes the exchange of GDP to GTP, converting inactive GDP-bound Rab proteins into their active GTP-bound form. Mediates the release of GDP from RAB8A and RAB8B but not from RAB3A or RAB5. Modulates actin organization and promotes polarized transport of RAB8A-specific vesicles to the cell surface. Together with RAB11A, RAB8A, the exocyst complex, PARD3, PRKCI, ANXA2, CDC42 and DNMBP promotes transcytosis of PODXL to the apical membrane initiation sites (AMIS), apical surface formation and lumenogenesis. Together with RAB11A and FIP3/RAB11FIP3, parts of the ciliary targeting complex that promotes preciliary vesicle trafficking to mother centriole and ciliogenesis initiation. Part of the ciliary targeting complex containing Rab11, ASAP1, RAB3IP and RAB11FIP3 and ARF4 that promotes RAB3IP preciliary vesicle trafficking to mother centriole and ciliogenesis initiation. In Rattus norvegicus (Rat), this protein is Rab-3A-interacting protein (Rab3ip).